The primary structure comprises 212 residues: Pyrrolidone-carboxylate peptidase (212 aa).

Active-site residues include Glu-80, Cys-143, and His-165.

The protein belongs to the peptidase C15 family. In terms of assembly, homotetramer.

The protein resides in the cytoplasm. The catalysed reaction is Release of an N-terminal pyroglutamyl group from a polypeptide, the second amino acid generally not being Pro.. Functionally, removes 5-oxoproline from various penultimate amino acid residues except L-proline. The chain is Pyrrolidone-carboxylate peptidase from Vibrio vulnificus (strain YJ016).